A 337-amino-acid polypeptide reads, in one-letter code: MEQPWPPPGPWSLPRAEGEAEEESDFDVFPSSPRCPQLPGGGAQMYSHGIELACQKQKEFVKSSVACKWNLAEAQQKLGSLALHNSESLDQEHAKAQTAVSELRQREEEWRQKEEALVQREKMCLWSTDAISKDVFNKSFINQDKRKDTEDEDKSESFMQKYEQKIRHFGMLSRWDDSQRFLSDHPYLVCEETAKYLILWCFHLEAEKKGALMEQIAHQAVVMQFIMEMAKNCNVDPRGCFRLFFQKAKAEEEGYFEAFKNELEAFKSRVRLYSQSQSFQPMTVQNHVPHSGVGSIGLLESLPQNPDYLQYSISTALCSLNSVVHKEDDEPKMMDTV.

Over residues methionine 1–tryptophan 11 the composition is skewed to pro residues. Residues methionine 1–glycine 40 are disordered. Residues glutamate 2 to methionine 171 form a self-association region. Phosphoserine is present on residues serine 32 and serine 88. Positions histidine 84 to lysine 122 form a coiled coil. The segment at lysine 147–glutamine 277 is self-association and interaction with Hsp90. Positions lysine 267 to valine 337 are interaction with Hsp70. The required for interaction with STIP1 stretch occupies residues serine 278–valine 337.

This sequence belongs to the CDC37 family. In terms of assembly, self-associates. Forms complexes with Hsp70 and Hsp90. Interacts with CDC37, FKBP4, PPID and STIP1. In terms of tissue distribution, expressed in brain, heart, kidney, liver, placenta and skeletal muscle.

Its subcellular location is the cytoplasm. In terms of biological role, co-chaperone that binds to numerous proteins and promotes their interaction with Hsp70 and Hsp90. The protein is Hsp90 co-chaperone Cdc37-like 1 (CDC37L1) of Homo sapiens (Human).